The sequence spans 134 residues: Transmembrane protein 100 (134 aa).

Residue serine 15 is modified to Phosphoserine. The next 2 helical transmembrane spans lie at 56-76 (CVIP…AVAY) and 84-104 (IISI…ASSA). Serine 121 is modified (phosphoserine).

As to quaternary structure, interacts (via C-terminus) with TRPA1 and TRPV1. Interacts with TASOR.

Its subcellular location is the cell membrane. It localises to the membrane. The protein localises to the perikaryon. It is found in the cytoplasm. The protein resides in the perinuclear region. Its subcellular location is the endoplasmic reticulum. Plays a role during embryonic arterial endothelium differentiation and vascular morphogenesis through the ACVRL1 receptor-dependent signaling pathway upon stimulation by bone morphogenetic proteins, such as GDF2/BMP9 and BMP10. Involved in the regulation of nociception, acting as a modulator of the interaction between TRPA1 and TRPV1, two molecular sensors and mediators of pain signals in dorsal root ganglia (DRG) neurons. Mechanistically, it weakens their interaction, thereby releasing the inhibition of TRPA1 by TRPV1 and increasing the single-channel open probability of the TRPA1-TRPV1 complex. The polypeptide is Transmembrane protein 100 (TMEM100) (Bos taurus (Bovine)).